Consider the following 160-residue polypeptide: Class B acid phosphatase (160 aa).

Positions 1-23 are cleaved as a signal peptide; it reads MRKVTLTLSAIALALSLNGAAMA. The active-site Nucleophile is aspartate 69. 2 residues coordinate Mg(2+): aspartate 69 and aspartate 71. Aspartate 71 functions as the Proton donor in the catalytic mechanism. 137-138 is a substrate binding site; that stretch reads TG.

Belongs to the class B bacterial acid phosphatase family. As to quaternary structure, homotetramer. Mg(2+) serves as cofactor.

Its subcellular location is the periplasm. It carries out the reaction a phosphate monoester + H2O = an alcohol + phosphate. Its function is as follows. Dephosphorylates several organic phosphate monoesters. Also has a phosphotransferase activity catalyzing the transfer of low-energy phosphate groups from organic phosphate monoesters to free hydroxyl groups of various organic compounds. In Proteus mirabilis, this protein is Class B acid phosphatase (aphA).